The sequence spans 71 residues: Equinin B (71 aa).

Positions 1–11 are cleaved as a signal peptide; sequence MAVIMVDQAEG. Residues 46–71 constitute a propeptide that is removed on maturation; that stretch reads GDEPQQMALDDESDPLVILPNNYNDY.

Post-translationally, contains 4 disulfide bonds.

Its subcellular location is the secreted. The protein resides in the target cell membrane. In terms of biological role, antimicrobial peptide with inhibitory activity against both Gram-positive and Gram-negative bacteria (E.coli (MIC=0.25 ug/ml), M.lysodeikticus (MIC=0.25 ug/ml), and V.alginolyticus (MIC=0.25 ug/ml)). Does not show hemolytic activity. In Actinia equina (Beadlet anemone), this protein is Equinin B.